The chain runs to 207 residues: Large ribosomal subunit protein uL4 (207 aa).

The span at 44–58 shows a compositional bias: basic and acidic residues; the sequence is RAPTRATRERSDVAR. The segment at 44-82 is disordered; the sequence is RAPTRATRERSDVARSGKKFGRQKGGGTARHGDRRSPIF.

Belongs to the universal ribosomal protein uL4 family. In terms of assembly, part of the 50S ribosomal subunit.

Functionally, one of the primary rRNA binding proteins, this protein initially binds near the 5'-end of the 23S rRNA. It is important during the early stages of 50S assembly. It makes multiple contacts with different domains of the 23S rRNA in the assembled 50S subunit and ribosome. In terms of biological role, forms part of the polypeptide exit tunnel. The polypeptide is Large ribosomal subunit protein uL4 (Zymomonas mobilis subsp. mobilis (strain ATCC 31821 / ZM4 / CP4)).